The following is a 123-amino-acid chain: Glucose starvation-inducible protein B (123 aa).

Basic and acidic residues-rich tracts occupy residues 1–29 (MADNNKMSREEAGRKGGETTSKNHDKEFY) and 41–109 (SKNH…KEFY). Positions 1–123 (MADNNKMSRE…SKGGNARNND (123 aa)) are disordered. 5 repeat units span residues 13–32 (GRKGGETTSKNHDKEFYQEI), 33–52 (GQKGGEATSKNHDKEFYQEI), 53–72 (GEKGGEATSKNHDKEFYQEI), 73–92 (GEKGGEATSENHDKEFYQEI), and 93–112 (GRKGGEATSKNHDKEFYQEI). The tract at residues 13–120 (GRKGGETTSK…EIGSKGGNAR (108 aa)) is 5 X 20 AA approximate tandem repeats.

Involved in an adaptive response to nutrient deprivation other than sporulation. The sequence is that of Glucose starvation-inducible protein B (gsiB) from Bacillus subtilis (strain 168).